Consider the following 551-residue polypeptide: Probable 4-coumarate--CoA ligase 1 (551 aa).

The ATP site is built by Ser205, Ser206, Gly207, Thr208, Thr209, and Lys213. Position 253 (Tyr253) interacts with (E)-4-coumaroyl-AMP. Position 274 (Lys274) interacts with CoA. The segment at 276 to 346 (EPVRFLELIQ…RFKGRLVIKQ (71 aa)) is SBD1. Positions 323, 346, 347, and 351 each coordinate (E)-4-coumaroyl-AMP. ATP contacts are provided by Gln346, Gly347, Thr351, Asp430, and Arg445. The tract at residues 347 to 409 (GYGATELSPA…IKGPNVMLGY (63 aa)) is SBD2. (E)-4-coumaroyl-AMP is bound by residues Lys447 and Lys451. CoA-binding residues include Lys453 and Gly454. Lys537 contacts ATP.

Belongs to the ATP-dependent AMP-binding enzyme family. Requires Mg(2+) as cofactor.

It catalyses the reaction (E)-4-coumarate + ATP + CoA = (E)-4-coumaroyl-CoA + AMP + diphosphate. The enzyme catalyses (E)-4-coumarate + ATP + H(+) = (E)-4-coumaroyl-AMP + diphosphate. It carries out the reaction (E)-4-coumaroyl-AMP + CoA = (E)-4-coumaroyl-CoA + AMP + H(+). Its pathway is phytoalexin biosynthesis; 3,4',5-trihydroxystilbene biosynthesis; 3,4',5-trihydroxystilbene from trans-4-coumarate: step 1/2. In terms of biological role, carboxylate--CoA ligase that may use 4-coumarate as substrate. Follows a two-step reaction mechanism, wherein the carboxylate substrate first undergoes adenylation by ATP, followed by a thioesterification in the presence of CoA to yield the final CoA thioester. This is Probable 4-coumarate--CoA ligase 1 (4cl1) from Dictyostelium discoideum (Social amoeba).